A 338-amino-acid polypeptide reads, in one-letter code: tRNA N6-adenosine threonylcarbamoyltransferase (338 aa).

Fe cation-binding residues include histidine 114 and histidine 118. Residues 137-141, aspartate 170, glycine 183, aspartate 187, and asparagine 277 each bind substrate; that span reads IVSGG. Aspartate 305 serves as a coordination point for Fe cation.

Belongs to the KAE1 / TsaD family. Fe(2+) is required as a cofactor.

Its subcellular location is the cytoplasm. It catalyses the reaction L-threonylcarbamoyladenylate + adenosine(37) in tRNA = N(6)-L-threonylcarbamoyladenosine(37) in tRNA + AMP + H(+). In terms of biological role, required for the formation of a threonylcarbamoyl group on adenosine at position 37 (t(6)A37) in tRNAs that read codons beginning with adenine. Is involved in the transfer of the threonylcarbamoyl moiety of threonylcarbamoyl-AMP (TC-AMP) to the N6 group of A37, together with TsaE and TsaB. TsaD likely plays a direct catalytic role in this reaction. The chain is tRNA N6-adenosine threonylcarbamoyltransferase from Clostridioides difficile (strain 630) (Peptoclostridium difficile).